A 196-amino-acid polypeptide reads, in one-letter code: V-type proton ATPase subunit E (196 aa).

It belongs to the V-ATPase E subunit family.

Produces ATP from ADP in the presence of a proton gradient across the membrane. The chain is V-type proton ATPase subunit E from Clostridium botulinum (strain Alaska E43 / Type E3).